A 126-amino-acid chain; its full sequence is Aspartate 1-decarboxylase (126 aa).

Catalysis depends on Ser-25, which acts as the Schiff-base intermediate with substrate; via pyruvic acid. Ser-25 is subject to Pyruvic acid (Ser). Thr-57 serves as a coordination point for substrate. Residue Tyr-58 is the Proton donor of the active site. 73-75 (GAA) provides a ligand contact to substrate.

Belongs to the PanD family. Heterooctamer of four alpha and four beta subunits. It depends on pyruvate as a cofactor. In terms of processing, is synthesized initially as an inactive proenzyme, which is activated by self-cleavage at a specific serine bond to produce a beta-subunit with a hydroxyl group at its C-terminus and an alpha-subunit with a pyruvoyl group at its N-terminus.

The protein localises to the cytoplasm. It carries out the reaction L-aspartate + H(+) = beta-alanine + CO2. It functions in the pathway cofactor biosynthesis; (R)-pantothenate biosynthesis; beta-alanine from L-aspartate: step 1/1. Catalyzes the pyruvoyl-dependent decarboxylation of aspartate to produce beta-alanine. In Citrobacter koseri (strain ATCC BAA-895 / CDC 4225-83 / SGSC4696), this protein is Aspartate 1-decarboxylase.